Reading from the N-terminus, the 416-residue chain is Glutamyl-tRNA reductase (416 aa).

Substrate-binding positions include 48 to 51, Ser-104, 109 to 111, and Gln-115; these read TCNR and EPQ. Catalysis depends on Cys-49, which acts as the Nucleophile. 184–189 is an NADP(+) binding site; it reads GAGEMI.

The protein belongs to the glutamyl-tRNA reductase family. Homodimer.

The catalysed reaction is (S)-4-amino-5-oxopentanoate + tRNA(Glu) + NADP(+) = L-glutamyl-tRNA(Glu) + NADPH + H(+). Its pathway is porphyrin-containing compound metabolism; protoporphyrin-IX biosynthesis; 5-aminolevulinate from L-glutamyl-tRNA(Glu): step 1/2. Functionally, catalyzes the NADPH-dependent reduction of glutamyl-tRNA(Glu) to glutamate 1-semialdehyde (GSA). The chain is Glutamyl-tRNA reductase from Dechloromonas aromatica (strain RCB).